The following is a 256-amino-acid chain: 2-C-methyl-D-erythritol 4-phosphate cytidylyltransferase (256 aa).

The protein belongs to the IspD/TarI cytidylyltransferase family. IspD subfamily.

It catalyses the reaction 2-C-methyl-D-erythritol 4-phosphate + CTP + H(+) = 4-CDP-2-C-methyl-D-erythritol + diphosphate. Its pathway is isoprenoid biosynthesis; isopentenyl diphosphate biosynthesis via DXP pathway; isopentenyl diphosphate from 1-deoxy-D-xylulose 5-phosphate: step 2/6. Its function is as follows. Catalyzes the formation of 4-diphosphocytidyl-2-C-methyl-D-erythritol from CTP and 2-C-methyl-D-erythritol 4-phosphate (MEP). The sequence is that of 2-C-methyl-D-erythritol 4-phosphate cytidylyltransferase from Corynebacterium glutamicum (strain R).